The following is a 390-amino-acid chain: Lipid-A-disaccharide synthase (390 aa).

It belongs to the LpxB family.

It catalyses the reaction a lipid X + a UDP-2-N,3-O-bis[(3R)-3-hydroxyacyl]-alpha-D-glucosamine = a lipid A disaccharide + UDP + H(+). It participates in bacterial outer membrane biogenesis; LPS lipid A biosynthesis. Condensation of UDP-2,3-diacylglucosamine and 2,3-diacylglucosamine-1-phosphate to form lipid A disaccharide, a precursor of lipid A, a phosphorylated glycolipid that anchors the lipopolysaccharide to the outer membrane of the cell. The protein is Lipid-A-disaccharide synthase of Neisseria gonorrhoeae (strain ATCC 700825 / FA 1090).